A 158-amino-acid polypeptide reads, in one-letter code: Probable cyclic pyranopterin monophosphate synthase (158 aa).

Substrate contacts are provided by residues Met75–His77 and Met111–Glu112. Asp126 is a catalytic residue.

It belongs to the MoaC family. Homohexamer; trimer of dimers.

The catalysed reaction is (8S)-3',8-cyclo-7,8-dihydroguanosine 5'-triphosphate = cyclic pyranopterin phosphate + diphosphate. It participates in cofactor biosynthesis; molybdopterin biosynthesis. Catalyzes the conversion of (8S)-3',8-cyclo-7,8-dihydroguanosine 5'-triphosphate to cyclic pyranopterin monophosphate (cPMP). The protein is Probable cyclic pyranopterin monophosphate synthase of Methanocorpusculum labreanum (strain ATCC 43576 / DSM 4855 / Z).